A 164-amino-acid chain; its full sequence is Photosystem II extrinsic protein V (164 aa).

The first 27 residues, 1-27, serve as a signal peptide directing secretion; the sequence is MALKSKFLVGSILATFILNGFSSPAQA. 4 residues coordinate heme c: cysteine 64, cysteine 67, histidine 68, and histidine 119.

Belongs to the cytochrome c family. PsbV subfamily. As to quaternary structure, PSII is composed of 1 copy each of membrane proteins PsbA, PsbB, PsbC, PsbD, PsbE, PsbF, PsbH, PsbI, PsbJ, PsbK, PsbL, PsbM, PsbT, PsbY, PsbZ, Psb30/Ycf12, at least 3 peripheral proteins of the oxygen-evolving complex and a large number of cofactors. It forms dimeric complexes. Requires heme c as cofactor.

It is found in the plastid. It localises to the chloroplast thylakoid membrane. Functionally, one of the extrinsic, lumenal subunits of photosystem II (PSII). PSII is a light-driven water plastoquinone oxidoreductase, using light energy to abstract electrons from H(2)O, generating a proton gradient subsequently used for ATP formation. The extrinsic proteins stabilize the structure of photosystem II oxygen-evolving complex (OEC), the ion environment of oxygen evolution and protect the OEC against heat-induced inactivation. The protein is Photosystem II extrinsic protein V of Emiliania huxleyi (Coccolithophore).